A 247-amino-acid chain; its full sequence is tRNA (guanine-N(1)-)-methyltransferase (247 aa).

Residues Gly115 and 134–139 (IGDFVL) each bind S-adenosyl-L-methionine.

The protein belongs to the RNA methyltransferase TrmD family. Homodimer.

Its subcellular location is the cytoplasm. The enzyme catalyses guanosine(37) in tRNA + S-adenosyl-L-methionine = N(1)-methylguanosine(37) in tRNA + S-adenosyl-L-homocysteine + H(+). Its function is as follows. Specifically methylates guanosine-37 in various tRNAs. The polypeptide is tRNA (guanine-N(1)-)-methyltransferase (Anaeromyxobacter sp. (strain K)).